Consider the following 208-residue polypeptide: Uracil phosphoribosyltransferase (208 aa).

Residues Arg-77, Arg-102, and 129–137 contribute to the 5-phospho-alpha-D-ribose 1-diphosphate site; that span reads DPMLATGNS. Residues Ile-193 and 198–200 contribute to the uracil site; that span reads GDA. Asp-199 contributes to the 5-phospho-alpha-D-ribose 1-diphosphate binding site.

This sequence belongs to the UPRTase family. It depends on Mg(2+) as a cofactor.

The catalysed reaction is UMP + diphosphate = 5-phospho-alpha-D-ribose 1-diphosphate + uracil. It participates in pyrimidine metabolism; UMP biosynthesis via salvage pathway; UMP from uracil: step 1/1. Its activity is regulated as follows. Allosterically activated by GTP. In terms of biological role, catalyzes the conversion of uracil and 5-phospho-alpha-D-ribose 1-diphosphate (PRPP) to UMP and diphosphate. This Mycoplasmopsis agalactiae (strain NCTC 10123 / CIP 59.7 / PG2) (Mycoplasma agalactiae) protein is Uracil phosphoribosyltransferase.